Consider the following 361-residue polypeptide: Phospho-N-acetylmuramoyl-pentapeptide-transferase (361 aa).

Transmembrane regions (helical) follow at residues 25 to 45 (RGIL…PAVI), 73 to 93 (TMGG…WGDL), 98 to 118 (VWLV…DDWI), 139 to 159 (IFGL…AAIT), 168 to 188 (IALP…IVGF), 200 to 220 (GLAI…AYAS), 237 to 257 (AGEL…FLWF), 264 to 284 (VFMG…IAVI), 290 to 310 (VLVI…IQVV), and 339 to 359 (VIVR…ATLK).

The protein belongs to the glycosyltransferase 4 family. MraY subfamily. The cofactor is Mg(2+).

The protein resides in the cell inner membrane. It catalyses the reaction UDP-N-acetyl-alpha-D-muramoyl-L-alanyl-gamma-D-glutamyl-meso-2,6-diaminopimeloyl-D-alanyl-D-alanine + di-trans,octa-cis-undecaprenyl phosphate = di-trans,octa-cis-undecaprenyl diphospho-N-acetyl-alpha-D-muramoyl-L-alanyl-D-glutamyl-meso-2,6-diaminopimeloyl-D-alanyl-D-alanine + UMP. Its pathway is cell wall biogenesis; peptidoglycan biosynthesis. Functionally, catalyzes the initial step of the lipid cycle reactions in the biosynthesis of the cell wall peptidoglycan: transfers peptidoglycan precursor phospho-MurNAc-pentapeptide from UDP-MurNAc-pentapeptide onto the lipid carrier undecaprenyl phosphate, yielding undecaprenyl-pyrophosphoryl-MurNAc-pentapeptide, known as lipid I. The polypeptide is Phospho-N-acetylmuramoyl-pentapeptide-transferase (Xanthomonas euvesicatoria pv. vesicatoria (strain 85-10) (Xanthomonas campestris pv. vesicatoria)).